The chain runs to 515 residues: Putative acetolactate synthase large subunit IlvX (515 aa).

Residue Glu-48 coordinates thiamine diphosphate. FAD contacts are provided by residues 249-269 (FAEG…AGAR) and 283-302 (DLVP…GAAD). The tract at residues 357–436 (TCGVLLPQAT…VTTVIYNNGA (80 aa)) is thiamine pyrophosphate binding. Residues Asp-407 and Asn-434 each coordinate Mg(2+).

Belongs to the TPP enzyme family. In terms of assembly, heterodimer of large catalytic subunit and small regulatory subunit. The cofactor is Mg(2+). It depends on thiamine diphosphate as a cofactor.

The catalysed reaction is 2 pyruvate + H(+) = (2S)-2-acetolactate + CO2. It functions in the pathway amino-acid biosynthesis; L-isoleucine biosynthesis; L-isoleucine from 2-oxobutanoate: step 1/4. The protein operates within amino-acid biosynthesis; L-valine biosynthesis; L-valine from pyruvate: step 1/4. Functionally, catalyzes the conversion of 2 pyruvate molecules into acetolactate in the first common step of the biosynthetic pathway of the branched-amino acids such as leucine, isoleucine, and valine. The chain is Putative acetolactate synthase large subunit IlvX (ilvX) from Mycobacterium tuberculosis (strain ATCC 25618 / H37Rv).